The chain runs to 352 residues: Histidinol-phosphate aminotransferase (352 aa).

The residue at position 221 (K221) is an N6-(pyridoxal phosphate)lysine.

This sequence belongs to the class-II pyridoxal-phosphate-dependent aminotransferase family. Histidinol-phosphate aminotransferase subfamily. As to quaternary structure, homodimer. Requires pyridoxal 5'-phosphate as cofactor.

The catalysed reaction is L-histidinol phosphate + 2-oxoglutarate = 3-(imidazol-4-yl)-2-oxopropyl phosphate + L-glutamate. The protein operates within amino-acid biosynthesis; L-histidine biosynthesis; L-histidine from 5-phospho-alpha-D-ribose 1-diphosphate: step 7/9. The polypeptide is Histidinol-phosphate aminotransferase (Staphylococcus aureus (strain bovine RF122 / ET3-1)).